A 336-amino-acid chain; its full sequence is Biotin synthase (336 aa).

In terms of domain architecture, Radical SAM core spans 54-281 (NAIQLSTLLS…KAMVRLSAGR (228 aa)). C69, C73, and C76 together coordinate [4Fe-4S] cluster. Positions 113, 144, 204, and 276 each coordinate [2Fe-2S] cluster.

The protein belongs to the radical SAM superfamily. Biotin synthase family. Homodimer. Requires [4Fe-4S] cluster as cofactor. [2Fe-2S] cluster is required as a cofactor.

It catalyses the reaction (4R,5S)-dethiobiotin + (sulfur carrier)-SH + 2 reduced [2Fe-2S]-[ferredoxin] + 2 S-adenosyl-L-methionine = (sulfur carrier)-H + biotin + 2 5'-deoxyadenosine + 2 L-methionine + 2 oxidized [2Fe-2S]-[ferredoxin]. It functions in the pathway cofactor biosynthesis; biotin biosynthesis; biotin from 7,8-diaminononanoate: step 2/2. In terms of biological role, catalyzes the conversion of dethiobiotin (DTB) to biotin by the insertion of a sulfur atom into dethiobiotin via a radical-based mechanism. The protein is Biotin synthase of Burkholderia thailandensis (strain ATCC 700388 / DSM 13276 / CCUG 48851 / CIP 106301 / E264).